Reading from the N-terminus, the 220-residue chain is Translation initiation factor 6 (220 aa).

The protein belongs to the eIF-6 family.

Its function is as follows. Binds to the 50S ribosomal subunit and prevents its association with the 30S ribosomal subunit to form the 70S initiation complex. This is Translation initiation factor 6 from Methanoculleus marisnigri (strain ATCC 35101 / DSM 1498 / JR1).